The sequence spans 513 residues: Dentin matrix acidic phosphoprotein 1 (513 aa).

Residues 1 to 16 form the signal peptide; the sequence is MKISILLMFLWGLSCA. The disordered stretch occupies residues 23 to 513; sequence QNNESEDSEE…QDDNDCQDGY (491 aa). N25 is a glycosylation site (N-linked (GlcNAc...) asparagine). The segment covering 46–60 has biased composition (low complexity); it reads ESSESSEGSKVSSEE. Over residues 101 to 119 the composition is skewed to acidic residues; sequence DKDDDEDDSGDDTFGDDDS. The segment covering 143-162 has biased composition (polar residues); it reads TIQASEESAPQGQDSAQDTT. The segment covering 163 to 180 has biased composition (basic and acidic residues); it reads SESRELDNEDRVDSKPEG. Over residues 208–220 the composition is skewed to acidic residues; sequence SELDDEGMQSDDP. A compositionally biased stretch (polar residues) spans 245–257; sequence NSEQANTQDSGGS. The segment covering 275–287 has biased composition (acidic residues); sequence EEDDRSELDDNNT. The N-linked (GlcNAc...) asparagine glycan is linked to N285. Polar residues predominate over residues 296–307; it reads TENSNSRDTGLS. The segment covering 309–325 has biased composition (basic and acidic residues); it reads PRRDSKGDSQEDSKENL. N-linked (GlcNAc...) asparagine glycosylation is found at N324, N345, and N351. A compositionally biased stretch (low complexity) spans 337-354; that stretch reads SSESSQEANLSSQENSSE. Residues 364-366 carry the Cell attachment site motif; it reads RGD. Residues 376–386 show a composition bias toward acidic residues; the sequence is EDQEDSDSSEE. N-linked (GlcNAc...) asparagine glycans are attached at residues N413 and N426. Positions 417-426 are enriched in acidic residues; the sequence is ESPESPEDEN. Residues 427-442 are compositionally biased toward low complexity; sequence SSSQEGLQSHSSSAES. N467 is a glycosylation site (N-linked (GlcNAc...) asparagine). Residues 484-502 are compositionally biased toward basic and acidic residues; sequence IEIESRKLTVDAYHNKPIG. Positions 503–513 are enriched in acidic residues; that stretch reads DQDDNDCQDGY.

As to quaternary structure, interacts with importin alpha. Phosphorylated in the cytosol and extracellular matrix and unphosphorylated in the nucleus. Phosphorylation is necessary for nucleocytoplasmic transport and may be catalyzed by a nuclear isoform of CK2 and can be augmented by calcium. Phosphorylated (in vitro) by FAM20C in the extracellular medium at sites within the S-x-E/pS motif. Expressed in tooth particularly in odontoblast, ameloblast and cementoblast.

Its subcellular location is the nucleus. It localises to the cytoplasm. The protein localises to the secreted. The protein resides in the extracellular space. It is found in the extracellular matrix. May have a dual function during osteoblast differentiation. In the nucleus of undifferentiated osteoblasts, unphosphorylated form acts as a transcriptional component for activation of osteoblast-specific genes like osteocalcin. During the osteoblast to osteocyte transition phase it is phosphorylated and exported into the extracellular matrix, where it regulates nucleation of hydroxyapatite. This chain is Dentin matrix acidic phosphoprotein 1 (DMP1), found in Homo sapiens (Human).